A 370-amino-acid chain; its full sequence is L-selectin (370 aa).

The first 28 residues, Met1–Cys28, serve as a signal peptide directing secretion. Positions Asp29–Cys38 are excised as a propeptide. The Extracellular portion of the chain corresponds to Trp39–Pro333. The 101-residue stretch at Ala55–Cys155 folds into the C-type lectin domain. 10 cysteine pairs are disulfide-bonded: Cys57/Cys155, Cys128/Cys147, Cys128/Cys160, Cys160/Cys171, Cys165/Cys180, Cys182/Cys191, Cys197/Cys241, Cys227/Cys254, Cys259/Cys303, and Cys289/Cys316. N-linked (GlcNAc...) asparagine glycosylation is found at Asn60, Asn77, and Asn104. 5 residues coordinate Ca(2+): Glu118, Asn120, Glu126, Asn143, and Asp144. In terms of domain architecture, EGF-like spans Tyr156–Gln192. Residue Asn177 is glycosylated (N-linked (GlcNAc...) asparagine). Sushi domains are found at residues Thr195–Val256 and Ile257–Lys318. 3 N-linked (GlcNAc...) asparagine glycosylation sites follow: Asn216, Asn226, and Asn246. Residues Asn308 and Asn320 are each glycosylated (N-linked (GlcNAc...) asparagine). Residues Leu334–Leu354 traverse the membrane as a helical segment. Residues Ala355–Gly370 lie on the Cytoplasmic side of the membrane.

It belongs to the selectin/LECAM family. In terms of assembly, interaction with SELPLG/PSGL1 and PODXL2 is required for promoting recruitment and rolling of leukocytes. This interaction is dependent on the sialyl Lewis X glycan modification of SELPLG and PODXL2, and tyrosine sulfation modifications of SELPLG. Sulfation on 'Tyr-51' of SELPLG is important for L-selectin binding. Post-translationally, N-glycosylated. In terms of tissue distribution, highly expressed in lymphocytes from peripheral lymph nodes. Low in lymphocytes isolated from Peyer patches.

The protein localises to the cell membrane. Functionally, calcium-dependent lectin that mediates cell adhesion by binding to glycoproteins on neighboring cells. Mediates the adherence of lymphocytes to endothelial cells of high endothelial venules in peripheral lymph nodes. Promotes initial tethering and rolling of leukocytes in endothelia. The chain is L-selectin (SELL) from Bos taurus (Bovine).